The sequence spans 294 residues: Nucleotide-binding protein CPF_0343 (294 aa).

8–15 (GLSGAGKT) is an ATP binding site. Residue 59–62 (DIRG) participates in GTP binding.

This sequence belongs to the RapZ-like family.

Functionally, displays ATPase and GTPase activities. The chain is Nucleotide-binding protein CPF_0343 from Clostridium perfringens (strain ATCC 13124 / DSM 756 / JCM 1290 / NCIMB 6125 / NCTC 8237 / Type A).